The primary structure comprises 167 residues: ATP synthase subunit b (167 aa).

A helical membrane pass occupies residues 15–37 (FWQTVIFLVTLYLLSKFAWGPIM).

The protein belongs to the ATPase B chain family. In terms of assembly, F-type ATPases have 2 components, F(1) - the catalytic core - and F(0) - the membrane proton channel. F(1) has five subunits: alpha(3), beta(3), gamma(1), delta(1), epsilon(1). F(0) has three main subunits: a(1), b(2) and c(10-14). The alpha and beta chains form an alternating ring which encloses part of the gamma chain. F(1) is attached to F(0) by a central stalk formed by the gamma and epsilon chains, while a peripheral stalk is formed by the delta and b chains.

The protein localises to the cell inner membrane. In terms of biological role, f(1)F(0) ATP synthase produces ATP from ADP in the presence of a proton or sodium gradient. F-type ATPases consist of two structural domains, F(1) containing the extramembraneous catalytic core and F(0) containing the membrane proton channel, linked together by a central stalk and a peripheral stalk. During catalysis, ATP synthesis in the catalytic domain of F(1) is coupled via a rotary mechanism of the central stalk subunits to proton translocation. Functionally, component of the F(0) channel, it forms part of the peripheral stalk, linking F(1) to F(0). The chain is ATP synthase subunit b from Cytophaga hutchinsonii (strain ATCC 33406 / DSM 1761 / CIP 103989 / NBRC 15051 / NCIMB 9469 / D465).